The following is a 101-amino-acid chain: Small ribosomal subunit protein uS14 (101 aa).

A disordered region spans residues 1-20; sequence MAKISAVERNKKRERLTKRD.

Belongs to the universal ribosomal protein uS14 family. As to quaternary structure, part of the 30S ribosomal subunit. Contacts proteins S3 and S10.

Functionally, binds 16S rRNA, required for the assembly of 30S particles and may also be responsible for determining the conformation of the 16S rRNA at the A site. In Rhodospirillum rubrum (strain ATCC 11170 / ATH 1.1.1 / DSM 467 / LMG 4362 / NCIMB 8255 / S1), this protein is Small ribosomal subunit protein uS14.